Reading from the N-terminus, the 82-residue chain is Small ribosomal subunit protein bS16 (82 aa).

Belongs to the bacterial ribosomal protein bS16 family.

The protein is Small ribosomal subunit protein bS16 of Vibrio campbellii (strain ATCC BAA-1116).